A 39-amino-acid polypeptide reads, in one-letter code: U1-nemetoxin-Csp1c (39 aa).

Cystine bridges form between Cys-1–Cys-15, Cys-8–Cys-19, Cys-14–Cys-36, and Cys-25–Cys-32.

In terms of tissue distribution, expressed by the venom gland.

Its subcellular location is the secreted. In terms of biological role, causes paralysis to insect larvae (H.virescens). This toxin is active only on insects. The protein is U1-nemetoxin-Csp1c of Calisoga sp. (Spider).